Consider the following 229-residue polypeptide: MPVRFDCFVTGTDTEIGKTLASAALLTALAGAGYRTAGLKPVAAGTLAGAPERTNEDIEQLRAAATVGLPMATLCPWLLDAPMSPHLAARRAGVTITLPPIVDALAQARTQADAVVVEGVGGFRVPLSDTFDTAQLAVALGLPVVLVVGLRLGCLNHAALTAEAIAARGLRLAGWIGNVVDATMAGLDDNVATLRRWIDAPHLGTIPRLPRPDARLAASHVDIAPLLAR.

Position 15–20 (15–20) interacts with ATP; that stretch reads EIGKTL. Threonine 19 contacts Mg(2+). Lysine 40 is an active-site residue. Residues aspartate 57, 118 to 121, and 207 to 209 each bind ATP; these read EGVG and PRL. Residues aspartate 57 and glutamate 118 each contribute to the Mg(2+) site.

This sequence belongs to the dethiobiotin synthetase family. In terms of assembly, homodimer. It depends on Mg(2+) as a cofactor.

It is found in the cytoplasm. The enzyme catalyses (7R,8S)-7,8-diammoniononanoate + CO2 + ATP = (4R,5S)-dethiobiotin + ADP + phosphate + 3 H(+). It functions in the pathway cofactor biosynthesis; biotin biosynthesis; biotin from 7,8-diaminononanoate: step 1/2. Functionally, catalyzes a mechanistically unusual reaction, the ATP-dependent insertion of CO2 between the N7 and N8 nitrogen atoms of 7,8-diaminopelargonic acid (DAPA, also called 7,8-diammoniononanoate) to form a ureido ring. This is ATP-dependent dethiobiotin synthetase BioD from Ralstonia nicotianae (strain ATCC BAA-1114 / GMI1000) (Ralstonia solanacearum).